The following is a 315-amino-acid chain: MARRSRGRFIDGIVLLDKDTGMSSNFALQRVKRFFNANKAGHTGALDPLATGMLPICLGEATKFSQHLLDADKRYLVTAKLGQRTDTSDSDGEIVQTREVNFTQEQLDTALEYFRGETMQVPSMYSALKYQGQPLYKYAREGIEVPREARPINVFELNFISLEGDELTLDIHCSKGTYIRTITDDLGEMLGCGAHVIMLRRTQVAGYPYDKMVSLKQLEELVAKADAESLTLSEVLDPLLLPMDTAVSGFKEINVSDELATYLMNGNPVQVANLPVDELVRITIGDARQFVGIGQMNDDGLLAPKRLIVLREPQD.

Catalysis depends on Asp47, which acts as the Nucleophile.

Belongs to the pseudouridine synthase TruB family. Type 1 subfamily.

The catalysed reaction is uridine(55) in tRNA = pseudouridine(55) in tRNA. Functionally, responsible for synthesis of pseudouridine from uracil-55 in the psi GC loop of transfer RNAs. The sequence is that of tRNA pseudouridine synthase B from Shewanella pealeana (strain ATCC 700345 / ANG-SQ1).